Consider the following 639-residue polypeptide: Threonine--tRNA ligase (639 aa).

The 61-residue stretch at 1–61 (MIHITLPDGS…TADCRLSIIT (61 aa)) folds into the TGS domain. Positions 242 to 533 (DHRKLGRELD…LLEQHAGALP (292 aa)) are catalytic. Residues C333, H384, and H510 each contribute to the Zn(2+) site.

This sequence belongs to the class-II aminoacyl-tRNA synthetase family. Homodimer. Requires Zn(2+) as cofactor.

The protein localises to the cytoplasm. The catalysed reaction is tRNA(Thr) + L-threonine + ATP = L-threonyl-tRNA(Thr) + AMP + diphosphate + H(+). Functionally, catalyzes the attachment of threonine to tRNA(Thr) in a two-step reaction: L-threonine is first activated by ATP to form Thr-AMP and then transferred to the acceptor end of tRNA(Thr). Also edits incorrectly charged L-seryl-tRNA(Thr). This chain is Threonine--tRNA ligase, found in Verminephrobacter eiseniae (strain EF01-2).